The primary structure comprises 395 residues: S-adenosylmethionine synthase (395 aa).

His16 contributes to the ATP binding site. A Mg(2+)-binding site is contributed by Asp18. A K(+)-binding site is contributed by Glu44. L-methionine is bound by residues Glu57 and Gln100. The flexible loop stretch occupies residues 100–110 (QSTDIAQGVNE). ATP-binding positions include 174 to 176 (DAK), 241 to 242 (RF), Asp250, 256 to 257 (RK), Ala273, and Lys277. Asp250 contributes to the L-methionine binding site. Residue Lys281 coordinates L-methionine.

The protein belongs to the AdoMet synthase family. Homotetramer; dimer of dimers. It depends on Mg(2+) as a cofactor. The cofactor is K(+).

Its subcellular location is the cytoplasm. The enzyme catalyses L-methionine + ATP + H2O = S-adenosyl-L-methionine + phosphate + diphosphate. The protein operates within amino-acid biosynthesis; S-adenosyl-L-methionine biosynthesis; S-adenosyl-L-methionine from L-methionine: step 1/1. Catalyzes the formation of S-adenosylmethionine (AdoMet) from methionine and ATP. The overall synthetic reaction is composed of two sequential steps, AdoMet formation and the subsequent tripolyphosphate hydrolysis which occurs prior to release of AdoMet from the enzyme. The chain is S-adenosylmethionine synthase from Streptococcus uberis (strain ATCC BAA-854 / 0140J).